The following is a 143-amino-acid chain: Large-conductance mechanosensitive channel (143 aa).

2 consecutive transmembrane segments (helical) span residues 19–39 and 81–101; these read VGVI…ADVI and GSFL…FLVV.

The protein belongs to the MscL family. In terms of assembly, homopentamer.

The protein resides in the cell inner membrane. Channel that opens in response to stretch forces in the membrane lipid bilayer. May participate in the regulation of osmotic pressure changes within the cell. This Rhodopseudomonas palustris (strain HaA2) protein is Large-conductance mechanosensitive channel.